The following is a 63-amino-acid chain: Protein CYSTEINE-RICH TRANSMEMBRANE MODULE 12 (63 aa).

A disordered region spans residues 1–34 (MQDMRDQNPPQGYPAAEQVSEQPGQDKKKKKPRF). The helical transmembrane segment at 40–56 (KGDRGFIEGCLFALCCC) threads the bilayer.

This sequence belongs to the CYSTM1 family. In terms of assembly, homodimer and heterodimers. Binds weakly to CYSTM4, CYSTM6 and CYSTM7. As to expression, mostly expressed in roots, flowers and siliques and, to a lower extent, in stems and leaves.

The protein localises to the cell membrane. It localises to the cytoplasm. Functionally, involved in resistance to abiotic stress. This Arabidopsis thaliana (Mouse-ear cress) protein is Protein CYSTEINE-RICH TRANSMEMBRANE MODULE 12.